We begin with the raw amino-acid sequence, 559 residues long: MSKKMFIRQAGNTLLNTPLLNKGSAFTLEERKNFNLIGLLPANIETIDEQVSRAYEQFSLFNSAMEKHIYLRNIQDTNETLYFRLINQHIEEMMPIIYTPTVGEACQKFSQIYRRNRGLFLSFEDQDELEAILNNAPNTHVKVIVITDGERILGLGDQGIGGMGIPIGKLALYTACGGISPEHTLPIVLDVGTNNSALLSDPMYMGWRHPRITGDQYDDFVDDCLKAIRRRWPNALIQFEDFAQANAMPLLMRYQNQFCCFNDDIQGTASVTVGTLLAAAHATGKKLSAQKVLFAGAGSAGCGIAEAIVAQMVSEGISVQQARSQVFMVDRWGMLEQEMPNLLPFQKPLAQPASLRTEWQIEANREISLLDVIQHAHPDVLIGVTGVPGLFNQEIIEAMAEDCERPVVMPLSNPTSRVEAKPEDILMWTQGQAIVATGSPFPDVVLAGKRYPIAQCNNSYIFPGVGLGVISANAHRVTNEMLQQASITLASLSPMLNGGNMLLPPLSEIQNVSRKIALEVAKKAVEQGKASHRTEERLLERIDEEFWYAQYCEYRRIAS.

Tyrosine 98 (proton donor) is an active-site residue. Arginine 151 is an NAD(+) binding site. The active-site Proton acceptor is the lysine 169. Positions 240, 241, and 264 each coordinate a divalent metal cation. Residues aspartate 264 and asparagine 413 each coordinate NAD(+).

The protein belongs to the malic enzymes family. As to quaternary structure, homotetramer. It depends on Mg(2+) as a cofactor. Mn(2+) serves as cofactor.

It catalyses the reaction (S)-malate + NAD(+) = pyruvate + CO2 + NADH. The catalysed reaction is oxaloacetate + H(+) = pyruvate + CO2. The polypeptide is NAD-dependent malic enzyme 2 (Vibrio vulnificus (strain YJ016)).